A 3948-amino-acid polypeptide reads, in one-letter code: Hybrid PKS-NRPS synthetase ucsA (3948 aa).

The region spanning 11–440 is the Ketosynthase family 3 (KS3) domain; it reads NEPIAVIGSG…GTNAHAILER (430 aa). Active-site for beta-ketoacyl synthase activity residues include Cys184, His323, and His363. The segment at 548–881 is malonyl-CoA:ACP transacylase (MAT) domain; it reads IFTGQGAQWP…FSTAIGQLWA (334 aa). The interval 940–1079 is N-terminal hotdog fold; sequence HPLLGTLGAD…GHIRLTITDF (140 aa). Residues 940-1254 form a dehydratase (DH) domain region; it reads HPLLGTLGAD…IRLIPFAAAS (315 aa). One can recognise a PKS/mFAS DH domain in the interval 940 to 1256; the sequence is HPLLGTLGAD…LIPFAAASEA (317 aa). His972 acts as the Proton acceptor; for dehydratase activity in catalysis. The tract at residues 1098–1256 is C-terminal hotdog fold; it reads MTEVDQNLFY…LIPFAAASEA (159 aa). The active-site Proton donor; for dehydratase activity is the Asp1161. Positions 1299-1460 are methyltransferase (MT) domain; the sequence is LAHVVGQITH…LRAGFTGVET (162 aa). The interval 1989-2165 is ketoreductase (KR) domain; that stretch reads TYILFGLAGA…ASVIDIGPIS (177 aa). The Carrier 1 domain maps to 2275-2357; it reads DVARVLRHAI…GLVDFAVDNL (83 aa). Ser2317 bears the O-(pantetheine 4'-phosphoryl)serine mark. Residues 2381–2404 are compositionally biased toward low complexity; that stretch reads PKAKTDAPAAAPTPASATAPGSKS. Positions 2381–2473 are disordered; it reads PKAKTDAPAA…SSQAASLESS (93 aa). Composition is skewed to polar residues over residues 2405 to 2418 and 2426 to 2437; these read DGNVSSIARSADQS and PQPTAILTNATA. Positions 2441–2456 are enriched in low complexity; the sequence is PVSPSLSVTGSTSSAA. Residues 2462 to 2473 show a composition bias toward polar residues; that stretch reads PTSSQAASLESS. Residues 2489 to 2926 form a condensation (C) domain region; it reads EKTLPMSYGQ…PQIFNSSKVQ (438 aa). The tract at residues 2950 to 3355 is adenylation (A) (KR) domain; it reads DIAAVQPTLT…GEFVLQARIK (406 aa). The tract at residues 3483–3507 is disordered; sequence PLTNKGGLKETPVARPTRYQNDPIP. In terms of domain architecture, Carrier 2 spans 3513-3592; sequence SSPFSSLDQV…QMASLLDGKD (80 aa). Ser3552 carries the O-(pantetheine 4'-phosphoryl)serine modification. A reductase (R) domain region spans residues 3633–3852; sequence LTGATGFLGL…QFVPVEDVAN (220 aa).

The protein in the C-terminal section; belongs to the NRP synthetase family.

Its pathway is mycotoxin biosynthesis. Functionally, hybrid PKS-NRPS synthetase; part of the gene cluster that mediates the biosynthesis of UCS1025A, a member of the pyrrolizidinone family that acts as a strong telomerase inhibitor and displays potent antibacterial and antitumor properties. These compounds share a hemiaminal-containing pyrrolizidinone core fused with a gamma-lactone, giving a furopyrrolizidine that is connected to a decalin fragment. The polyketide synthase module (PKS) of the PKS-NRPS ucsA is responsible for the synthesis of the polyketide backbone via the condensation of an acetyl-CoA starter unit with 6 malonyl-CoA units. The downstream nonribosomal peptide synthetase (NRPS) module then amidates the carboxyl end of the polyketide with a 2S,3S-methylproline derived from L-isoleucine by the 2-oxoglutarate-dependent dioxygenase ucsF which converts L-isoleucine to (4S,5S)-4-methylpyrroline-5-carboxylate that is further converted to 2S,3S-methylproline by the pyrroline-5-carboxylate reductase ucsG. Reductive release of the completed aminoacyl polyketide from the assembly line can form the 3-pyrrolin-2-one structure via an intramolecular Knoevenagel reaction. Because ucsA lacks a designated enoylreductase (ER) domain, the required activity is provided the enoyl reductase ucsL. This keto acyclic precursor is the substrate of the Diels-Alderase ucsH, that catalyzes the Diels-Alder cycloaddition. Oxidation of the 3S-methyl group to a carboxylate by the cytochrome P450 monooxygenase ucsK allows an oxa-Michael cyclization that might involve the reductase/dehydrogenase ucsI and which furnishes the furopyrrolizidine. The oxidase ucsJ likely plays a critical role in stereoselective reduction of the C5-C6 double bond to afford the required R-configured carboxylate group. Further enolization and oxidation at C5 by an unidentified enzyme affords the last intermediate that can undergo oxa-Michael cyclization to yield UCS1025A. The protein is Hybrid PKS-NRPS synthetase ucsA of Acremonium sp.